Reading from the N-terminus, the 152-residue chain is Ribonuclease H (152 aa).

The RNase H type-1 domain maps to 1 to 142 (MDSKVVIYTD…ADKLAVQGRE (142 aa)). D10, E48, D70, and D134 together coordinate Mg(2+).

It belongs to the RNase H family. In terms of assembly, monomer. It depends on Mg(2+) as a cofactor.

Its subcellular location is the cytoplasm. It carries out the reaction Endonucleolytic cleavage to 5'-phosphomonoester.. Endonuclease that specifically degrades the RNA of RNA-DNA hybrids. The sequence is that of Ribonuclease H from Rickettsia felis (strain ATCC VR-1525 / URRWXCal2) (Rickettsia azadi).